A 127-amino-acid chain; its full sequence is Ribonuclease P protein component (127 aa).

Residues 99 to 127 (ALSASLRQQLRDGIDRSARRQEPAAERQR) are disordered. Over residues 107-127 (QLRDGIDRSARRQEPAAERQR) the composition is skewed to basic and acidic residues.

This sequence belongs to the RnpA family. Consists of a catalytic RNA component (M1 or rnpB) and a protein subunit.

The catalysed reaction is Endonucleolytic cleavage of RNA, removing 5'-extranucleotides from tRNA precursor.. RNaseP catalyzes the removal of the 5'-leader sequence from pre-tRNA to produce the mature 5'-terminus. It can also cleave other RNA substrates such as 4.5S RNA. The protein component plays an auxiliary but essential role in vivo by binding to the 5'-leader sequence and broadening the substrate specificity of the ribozyme. The sequence is that of Ribonuclease P protein component from Mycobacteroides abscessus (strain ATCC 19977 / DSM 44196 / CCUG 20993 / CIP 104536 / JCM 13569 / NCTC 13031 / TMC 1543 / L948) (Mycobacterium abscessus).